The primary structure comprises 170 residues: Peptide deformylase (170 aa).

Fe cation-binding residues include C91 and H133. Residue E134 is part of the active site. H137 provides a ligand contact to Fe cation.

It belongs to the polypeptide deformylase family. It depends on Fe(2+) as a cofactor.

It carries out the reaction N-terminal N-formyl-L-methionyl-[peptide] + H2O = N-terminal L-methionyl-[peptide] + formate. Removes the formyl group from the N-terminal Met of newly synthesized proteins. Requires at least a dipeptide for an efficient rate of reaction. N-terminal L-methionine is a prerequisite for activity but the enzyme has broad specificity at other positions. This Actinobacillus pleuropneumoniae serotype 7 (strain AP76) protein is Peptide deformylase.